The sequence spans 142 residues: MAKKVTGYLKLQVPAGAANPSPPIGPALGQRGLNIMEFCKAFNAQTQKEEKNTPIPVVITIYADRSFTFEMKTPPMAYFLKQAAKIQSGSKAPGRDSAGQVTKAQVREIAEKKMKDLNCDTVEAAMSMVEGSARSMGLQVAE.

It belongs to the universal ribosomal protein uL11 family. In terms of assembly, part of the ribosomal stalk of the 50S ribosomal subunit. Interacts with L10 and the large rRNA to form the base of the stalk. L10 forms an elongated spine to which L12 dimers bind in a sequential fashion forming a multimeric L10(L12)X complex. Post-translationally, one or more lysine residues are methylated.

Its function is as follows. Forms part of the ribosomal stalk which helps the ribosome interact with GTP-bound translation factors. The protein is Large ribosomal subunit protein uL11 of Nitrobacter hamburgensis (strain DSM 10229 / NCIMB 13809 / X14).